The chain runs to 354 residues: Uroporphyrinogen decarboxylase (354 aa).

Substrate contacts are provided by residues 27 to 31 (RQAGR), D77, Y154, T209, and H327.

Belongs to the uroporphyrinogen decarboxylase family. In terms of assembly, homodimer.

It is found in the cytoplasm. It catalyses the reaction uroporphyrinogen III + 4 H(+) = coproporphyrinogen III + 4 CO2. It functions in the pathway porphyrin-containing compound metabolism; protoporphyrin-IX biosynthesis; coproporphyrinogen-III from 5-aminolevulinate: step 4/4. In terms of biological role, catalyzes the decarboxylation of four acetate groups of uroporphyrinogen-III to yield coproporphyrinogen-III. This chain is Uroporphyrinogen decarboxylase, found in Actinobacillus pleuropneumoniae serotype 5b (strain L20).